The following is a 479-amino-acid chain: Ankyrin repeat, SAM and basic leucine zipper domain-containing protein 1 (479 aa).

Residues serine 22 and serine 24 each carry the phosphoserine modification. ANK repeat units follow at residues 49–78 (EKNE…SVDS), 82–111 (YGWT…NASF), 114–148 (DKQT…DPNV), 152–181 (RLMT…EVNT), 185–214 (NGYT…NKML), and 218–247 (DGKT…PLEG). Residues 276–338 (SYTALGDLEI…KILDALKELQ (63 aa)) form the SAM domain.

In terms of assembly, interacts with DDX4, PIWIL1, RANBP9 and TDRD1.

The protein resides in the cytoplasm. Functionally, plays a central role during spermatogenesis by repressing transposable elements and preventing their mobilization, which is essential for the germline integrity. Acts via the piRNA metabolic process, which mediates the repression of transposable elements during meiosis by forming complexes composed of piRNAs and Piwi proteins and governs the methylation and subsequent repression of transposons. Its association with pi-bodies suggests a participation in the primary piRNAs metabolic process. Required prior to the pachytene stage to facilitate the production of multiple types of piRNAs, including those associated with repeats involved in the regulation of retrotransposons. May act by mediating protein-protein interactions during germ cell maturation. This chain is Ankyrin repeat, SAM and basic leucine zipper domain-containing protein 1 (ASZ1), found in Rhinolophus ferrumequinum (Greater horseshoe bat).